The sequence spans 398 residues: Circumsporozoite protein (398 aa).

The N-terminal stretch at 1–23 is a signal peptide; it reads MKNFNLLAVSSILLVDLFRTQWG. A disordered region spans residues 50–110; that stretch reads AQVRQSASRG…AAAGEAGNNA (61 aa). Positions 66–93 are enriched in basic and acidic residues; it reads PKNEEGADKPKKKDEKQVEPKKPRENKL. A required for the binding to heparan sulfate proteoglycans (HSPGs) on the surface of host hepatocytes region spans residues 81 to 89; sequence KQVEPKKPR. The region I; contains the proteolytic cleavage site stretch occupies residues 92–96; that stretch reads KLKQP. Tandem repeats lie at residues 97-105, 106-114, 115-123, 124-132, 133-141, 142-150, 151-159, 160-168, 169-177, 178-186, 187-195, 196-204, 205-213, 214-222, 223-231, 232-240, 241-257, 258-274, and 275-291. Over residues 97 to 110 the composition is skewed to low complexity; sequence AGNNAAAGEAGNNA. A 16 X 9 AA tandem repeats of A-G-N-N-A-A-[AG]-G-[EA] region spans residues 97–240; sequence AGNNAAAGEA…AAGNNAAAGA (144 aa). The 3 X 17 AA tandem repeats of A-G-N-N-A-A-A-G-E-A-G-A-G-G-A-G-[RG] stretch occupies residues 241–291; sequence AGNNAAAGEAGAGGAGRAGNNAAAGEAGAGGAGRAGNNAAAGEAGAGGAGG. The segment at 248–310 is disordered; the sequence is GEAGAGGAGR…AGQGQNNGGA (63 aa). Residues 284-293 show a composition bias toward gly residues; that stretch reads AGAGGAGGNA. The TSP type-1 domain maps to 324–376; that stretch reads KIRSTIGVEWSPCSVTCGKGVRMRRKVNAANKKPEELDANDLETEVCTMDKCA. Intrachain disulfides connect cysteine 336/cysteine 370 and cysteine 340/cysteine 375. Threonine 339 carries an O-linked (Fuc) threonine glycan. The GPI-anchor amidated cysteine moiety is linked to residue cysteine 375. A propeptide spans 376–398 (removed in mature form); sequence AGIFNVVSNSLGLVILLVLALFN.

It belongs to the plasmodium circumsporozoite protein family. In terms of processing, during host cell invasion, proteolytically cleaved at the cell membrane in the region I by a papain-like cysteine protease of parasite origin. Cleavage is triggered by the sporozoite contact with highly sulfated heparan sulfate proteoglycans (HSPGs) present on the host hepatocyte cell surface. Cleavage exposes the TSP type-1 (TSR) domain and is required for productive invasion of host hepatocytes but not for adhesion to the host cell membrane. Cleavage is dispensable for sporozoite development in the oocyst, motility and for traversal of host and vector cells. O-glycosylated; maybe by POFUT2.

Its subcellular location is the cell membrane. The protein localises to the cytoplasm. In terms of biological role, essential sporozoite protein. In the mosquito vector, required for sporozoite development in the oocyst, migration through the vector hemolymph and entry into the vector salivary glands. In the vertebrate host, required for sporozoite migration through the host dermis and infection of host hepatocytes. Binds to highly sulfated heparan sulfate proteoglycans (HSPGs) on the surface of host hepatocytes. Functionally, in the vertebrate host, binds to highly sulfated heparan sulfate proteoglycans (HSPGs) on the surface of host hepatocytes and is required for sporozoite invasion of the host hepatocytes. This chain is Circumsporozoite protein, found in Plasmodium cynomolgi (strain Ceylon).